The following is a 145-amino-acid chain: Deoxyuridine 5'-triphosphate nucleotidohydrolase (145 aa).

Substrate-binding positions include 65–67 (RSG), Asn-78, and 82–84 (TID).

This sequence belongs to the dUTPase family. Requires Mg(2+) as cofactor.

The enzyme catalyses dUTP + H2O = dUMP + diphosphate + H(+). The protein operates within pyrimidine metabolism; dUMP biosynthesis; dUMP from dCTP (dUTP route): step 2/2. This enzyme is involved in nucleotide metabolism: it produces dUMP, the immediate precursor of thymidine nucleotides and it decreases the intracellular concentration of dUTP so that uracil cannot be incorporated into DNA. The sequence is that of Deoxyuridine 5'-triphosphate nucleotidohydrolase from Clostridium tetani (strain Massachusetts / E88).